Here is a 155-residue protein sequence, read N- to C-terminus: Small ribosomal subunit protein uS7 (155 aa).

This sequence belongs to the universal ribosomal protein uS7 family. Part of the 30S ribosomal subunit. Contacts proteins S9 and S11.

In terms of biological role, one of the primary rRNA binding proteins, it binds directly to 16S rRNA where it nucleates assembly of the head domain of the 30S subunit. Is located at the subunit interface close to the decoding center, probably blocks exit of the E-site tRNA. The protein is Small ribosomal subunit protein uS7 of Chlorobium phaeobacteroides (strain DSM 266 / SMG 266 / 2430).